A 130-amino-acid chain; its full sequence is Small ribosomal subunit protein uS8 (130 aa).

This sequence belongs to the universal ribosomal protein uS8 family. As to quaternary structure, part of the 30S ribosomal subunit. Contacts proteins S5 and S12.

Functionally, one of the primary rRNA binding proteins, it binds directly to 16S rRNA central domain where it helps coordinate assembly of the platform of the 30S subunit. This is Small ribosomal subunit protein uS8 from Photobacterium profundum (strain SS9).